A 383-amino-acid polypeptide reads, in one-letter code: MSSSSELGNASSVPLQFLLFIDDRPNSQDSVQEIGQCLTNLLDGHSHDLQILQISKHPHLVEHFRLVATPSLIKLQPEPRQVLAGSNIIQQLQKWWPRWQQELAMDPNPEDTGQSPSCPREISSVGYSGELMKMSDELFLLKKDKEELLQQIQFKDQILAMLAHDLRSPLTAASIAVDTLELLQHKPIEEQKPALRSQLLYQARKQFKIMDRLIEDILQASKNLNSQFQVHGRPLAIADLCQEVLELYQAKFSKKNLTITYDIPKDLPNVFADEELIRQVIANLLDNAIKYTPAHGSITVGALHRTTQKVQVSITDNGPGIPNSKQETIFEGHFRLQRDEQTDGYGLGLSLCRKIIQAHYGQIWVDSRPKQGSSFHFTLPVYR.

The Histidine kinase domain occupies 161–383 (MLAHDLRSPL…SFHFTLPVYR (223 aa)). Residue histidine 164 is modified to Phosphohistidine; by autocatalysis.

Homooligomerizes. Interacts with KaiC1. Interacts with KaiC1 and RpaA. Binds to the B-loop in the CI domain of KaiC; SasA and KaiB compete to bind to the CI domain.

The enzyme catalyses ATP + protein L-histidine = ADP + protein N-phospho-L-histidine.. Member of the two-component regulatory system SasA/RpaA involved in genome-wide circadian gene expression. One of several clock output pathways. Participates in the Kai clock protein complex, the main circadian regulator in cyanobacteria, via its interaction with KaiC. KaiC enhances the autophosphorylation activity of SasA, which then transfers its phosphate group to RpaA to activate it. In addition to its output function, recruits fold-shifted KaiB (KaiB(fs)) to KaiC to cooperatively form the KaiB(6):KaiC(6) complex (independent of SasA kinase activity). Required for robustness of the circadian rhythm of gene expression and is involved in clock output, also required for adaptation to light/dark cycles. Its function is as follows. Plays an important role in glucose metabolism, important for expression of genes involved in glycolysis, gluconeogenesis, the oxidative pentose phosphate pathway, and glycogen metabolism. Required for heterotrophic growth. Overexpression from the psbAII promoter leads to altered levels of genes involved in carbon metabolism, increased levels of transcripts for clock oscillator genes in the light and the dark, complete loss of glycogen accumulation, decreased levels of metabolites of sugar catabolism and increased levels of amino acids in the light and increased levels of SigE protein. This chain is Adaptive-response sensory kinase SasA, found in Synechocystis sp. (strain ATCC 27184 / PCC 6803 / Kazusa).